A 212-amino-acid polypeptide reads, in one-letter code: Superoxide dismutase [Fe] 1, chloroplastic (212 aa).

The residue at position 2 (A2) is an N-acetylalanine. Fe cation contacts are provided by H35, H87, D169, and H173.

This sequence belongs to the iron/manganese superoxide dismutase family. As to quaternary structure, homodimer. Interacts with cpn20/cpn21. The cofactor is Fe cation.

Its subcellular location is the cell membrane. The protein localises to the plastid. It localises to the chloroplast membrane. The protein resides in the chloroplast stroma. The enzyme catalyses 2 superoxide + 2 H(+) = H2O2 + O2. Activated by cpn20/cpn21. Its function is as follows. Destroys superoxide anion radicals which are normally produced within the cells and which are toxic to biological systems. The protein is Superoxide dismutase [Fe] 1, chloroplastic (FSD1) of Arabidopsis thaliana (Mouse-ear cress).